The following is a 205-amino-acid chain: Ribosomal RNA small subunit methyltransferase G (205 aa).

S-adenosyl-L-methionine-binding positions include glycine 73, leucine 78, valine 124–glutamate 125, and arginine 139.

Belongs to the methyltransferase superfamily. RNA methyltransferase RsmG family.

Its subcellular location is the cytoplasm. The catalysed reaction is guanosine(527) in 16S rRNA + S-adenosyl-L-methionine = N(7)-methylguanosine(527) in 16S rRNA + S-adenosyl-L-homocysteine. Functionally, specifically methylates the N7 position of guanine in position 527 of 16S rRNA. The chain is Ribosomal RNA small subunit methyltransferase G from Erwinia tasmaniensis (strain DSM 17950 / CFBP 7177 / CIP 109463 / NCPPB 4357 / Et1/99).